A 94-amino-acid chain; its full sequence is Neurotoxin 213 (94 aa).

Residues 1–22 (MLKFILTCTSVILFTAVEDSSC) form the signal peptide. Residues 24-88 (KGGNYPISVY…YWDYHRNNCK (65 aa)) form the LCN-type CS-alpha/beta domain. 3 disulfide bridges follow: Cys-39/Cys-62, Cys-48/Cys-67, and Cys-52/Cys-69.

This sequence belongs to the long (3 C-C) scorpion toxin superfamily. Expressed by the venom gland.

Its subcellular location is the secreted. The sequence is that of Neurotoxin 213 from Lychas mucronatus (Chinese swimming scorpion).